A 505-amino-acid polypeptide reads, in one-letter code: Deoxyguanosinetriphosphate triphosphohydrolase (505 aa).

One can recognise an HD domain in the interval Arg-66–Cys-273.

The protein belongs to the dGTPase family. Type 1 subfamily. As to quaternary structure, homotetramer. Mg(2+) is required as a cofactor.

It carries out the reaction dGTP + H2O = 2'-deoxyguanosine + triphosphate + H(+). Functionally, dGTPase preferentially hydrolyzes dGTP over the other canonical NTPs. This is Deoxyguanosinetriphosphate triphosphohydrolase from Escherichia coli O17:K52:H18 (strain UMN026 / ExPEC).